We begin with the raw amino-acid sequence, 658 residues long: Aspartate--tRNA ligase, mitochondrial (658 aa).

E198 is an L-aspartate binding site. Residues Q226 to K229 are aspartate. An L-aspartate-binding site is contributed by R248. Residues R248–E250 and E553 each bind ATP. Residue R560 participates in L-aspartate binding. G604 to R607 contributes to the ATP binding site.

Belongs to the class-II aminoacyl-tRNA synthetase family. Type 1 subfamily.

It localises to the mitochondrion matrix. It carries out the reaction tRNA(Asp) + L-aspartate + ATP = L-aspartyl-tRNA(Asp) + AMP + diphosphate. Its function is as follows. Catalyzes the attachment of aspartate to tRNA(Asp) in the mitochondrion. The chain is Aspartate--tRNA ligase, mitochondrial (MSD1) from Saccharomyces cerevisiae (strain ATCC 204508 / S288c) (Baker's yeast).